A 249-amino-acid polypeptide reads, in one-letter code: UDP-N-acetyl-D-mannosaminuronic acid transferase (249 aa).

The protein belongs to the glycosyltransferase 26 family.

It catalyses the reaction UDP-N-acetyl-alpha-D-mannosaminouronate + N-acetyl-alpha-D-glucosaminyl-di-trans,octa-cis-undecaprenyl diphosphate = beta-D-ManNAcA-(1-&gt;4)-alpha-D-GlcNAc-di-trans,octa-cis-undecaprenyl diphosphate + UDP + H(+). It functions in the pathway bacterial outer membrane biogenesis; enterobacterial common antigen biosynthesis. Catalyzes the synthesis of Und-PP-GlcNAc-ManNAcA (Lipid II), the second lipid-linked intermediate involved in enterobacterial common antigen (ECA) synthesis. The sequence is that of UDP-N-acetyl-D-mannosaminuronic acid transferase from Pectobacterium atrosepticum (strain SCRI 1043 / ATCC BAA-672) (Erwinia carotovora subsp. atroseptica).